The chain runs to 276 residues: Cruxhalorhodopsin-3 (276 aa).

A propeptide spanning residues 1 to 21 (MPAASTAATTLLQASQSEVLG) is cleaved from the precursor. At 22–25 (EIQS) the chain is on the extracellular side. Residues 26–51 (NFLLNSSLWVNIALAGVVILLFVAMG) traverse the membrane as a helical segment. The Cytoplasmic portion of the chain corresponds to 52 to 57 (RELESS). A helical membrane pass occupies residues 58–81 (RAKLIWVATMLVPLVSISSYAGLA). At 82-105 (SGLTVGFLQMPPGHALAGQEVLSP) the chain is on the extracellular side. The helical transmembrane segment at 106–127 (WGRYLTWTFSTPMILLALGLLA) threads the bilayer. Over 128–130 (DTD) the chain is Cytoplasmic. The chain crosses the membrane as a helical span at residues 131–154 (MASLFTAITMDIGMCITGLAAALV). The Extracellular portion of the chain corresponds to 155-157 (TSS). Residues 158–180 (HLLRWVFYGISCAFFIAVLYVLL) form a helical membrane-spanning segment. Residues 181 to 192 (VEWPADAEAAGT) lie on the Cytoplasmic side of the membrane. A helical membrane pass occupies residues 193–216 (SEIFGTLKLLTVVLWLGYPILWAL). Over 217 to 225 (GSEGVALLS) the chain is Extracellular. Residues 226-254 (VGVTSWGYSGLDILAKYVFAFLLLRWVAA) traverse the membrane as a helical segment. Lysine 241 carries the post-translational modification N6-(retinylidene)lysine. At 255–276 (NEDTVTQAGMSLGSGGAAPADD) the chain is on the cytoplasmic side.

Belongs to the archaeal/bacterial/fungal opsin family.

The protein localises to the cell membrane. Functionally, light-driven chloride pump. The polypeptide is Cruxhalorhodopsin-3 (choP3) (Haloarcula vallismortis (Halobacterium vallismortis)).